Consider the following 571-residue polypeptide: Glutamate--tRNA ligase (571 aa).

The short motif at proline 38–glycine 48 is the 'HIGH' region element. Positions lysine 316 to arginine 320 match the 'KMSKS' region motif. Lysine 319 contacts ATP.

It belongs to the class-I aminoacyl-tRNA synthetase family. Glutamate--tRNA ligase type 1 subfamily. Monomer.

It is found in the cytoplasm. It carries out the reaction tRNA(Glu) + L-glutamate + ATP = L-glutamyl-tRNA(Glu) + AMP + diphosphate. Functionally, catalyzes the attachment of glutamate to tRNA(Glu) in a two-step reaction: glutamate is first activated by ATP to form Glu-AMP and then transferred to the acceptor end of tRNA(Glu). This is Glutamate--tRNA ligase from Sorangium cellulosum (strain So ce56) (Polyangium cellulosum (strain So ce56)).